Reading from the N-terminus, the 108-residue chain is UPF0060 membrane protein Mvan_3406 (108 aa).

Helical transmembrane passes span leucine 7–valine 27, glycine 32–phenylalanine 52, valine 61–aspartate 81, and arginine 87–proline 107.

Belongs to the UPF0060 family.

The protein resides in the cell membrane. This is UPF0060 membrane protein Mvan_3406 from Mycolicibacterium vanbaalenii (strain DSM 7251 / JCM 13017 / BCRC 16820 / KCTC 9966 / NRRL B-24157 / PYR-1) (Mycobacterium vanbaalenii).